The following is a 622-amino-acid chain: Low affinity potassium transport system protein Kup (622 aa).

The next 12 helical transmembrane spans lie at 9–29, 49–69, 103–123, 137–157, 165–185, 213–233, 247–267, 276–296, 337–357, 363–383, 396–416, and 419–439; these read LPAI…TSPL, VFGF…IKYL, VIMG…TPAI, PQLD…LFMI, VGQL…GLGL, VSFI…ALYA, WFTV…ALLL, PFFL…AALA, IYIP…IVSF, LAAA…ILST, FVAL…TANL, and LLSG…VMTT.

The protein belongs to the HAK/KUP transporter (TC 2.A.72) family.

The protein localises to the cell inner membrane. The catalysed reaction is K(+)(in) + H(+)(in) = K(+)(out) + H(+)(out). Responsible for the low-affinity transport of potassium into the cell. Likely operates as a K(+):H(+) symporter. In Escherichia coli O6:K15:H31 (strain 536 / UPEC), this protein is Low affinity potassium transport system protein Kup.